The primary structure comprises 60 residues: Large ribosomal subunit protein uL30 (60 aa).

It belongs to the universal ribosomal protein uL30 family. As to quaternary structure, part of the 50S ribosomal subunit.

The chain is Large ribosomal subunit protein uL30 from Xanthobacter autotrophicus (strain ATCC BAA-1158 / Py2).